We begin with the raw amino-acid sequence, 407 residues long: MDFAMSAKAIDYRTRLSDFMTEHVFGAEADYDDYRRAAGPADHTAPPIIEELKTKAKDRGLWNLFLSAESGLTNLEYAPLAEMTGWSMEIAPEALNCAAPDTGNMEILHMFGTEQQRAQWLRPLLDGKIRSAFSMTEPAVASSDARNIETTISRDGADYVINGRKWWTSGAADPRCKILIVMGRTNPDAAAHQQQSMVLVPIDTPGVTIVRSTPVFGWQDRHGHCEIDYHNVRVPATNLLGEEGSGFAIAQARLGPGRIHHCMRALGAAERALALMVNRVRNRVAFGRPLAEQGVVQQAIAQSRNEIDQARLLCEKAAWTIDQHGNKEARHLVAMIKAVAPRVACDVIDRAIQVHGAAGVSDDTPLARLYGWHRAMRIFDGPDEVHLRSIARAELSREKSTFAAAVT.

Belongs to the acyl-CoA dehydrogenase family. Requires FAD as cofactor.

The enzyme catalyses a 2,3-saturated acyl-CoA + A = a 2,3-dehydroacyl-CoA + AH2. This Mycobacterium tuberculosis (strain ATCC 25618 / H37Rv) protein is Probable acyl-CoA dehydrogenase FadE2.